The chain runs to 207 residues: Small ribosomal subunit protein uS4 (207 aa).

The segment covering glutamine 29–proline 38 has biased composition (basic and acidic residues). The segment at glutamine 29–leucine 54 is disordered. Residues glycine 42–tyrosine 52 are compositionally biased toward polar residues. Positions serine 97–leucine 160 constitute an S4 RNA-binding domain.

This sequence belongs to the universal ribosomal protein uS4 family. Part of the 30S ribosomal subunit. Contacts protein S5. The interaction surface between S4 and S5 is involved in control of translational fidelity.

In terms of biological role, one of the primary rRNA binding proteins, it binds directly to 16S rRNA where it nucleates assembly of the body of the 30S subunit. With S5 and S12 plays an important role in translational accuracy. The sequence is that of Small ribosomal subunit protein uS4 from Variovorax paradoxus (strain S110).